Reading from the N-terminus, the 390-residue chain is Methylthioribose-1-phosphate isomerase (390 aa).

Asp258 functions as the Proton donor in the catalytic mechanism.

It belongs to the eIF-2B alpha/beta/delta subunits family. MtnA subfamily.

The protein localises to the cytoplasm. It is found in the nucleus. It carries out the reaction 5-(methylsulfanyl)-alpha-D-ribose 1-phosphate = 5-(methylsulfanyl)-D-ribulose 1-phosphate. Its pathway is amino-acid biosynthesis; L-methionine biosynthesis via salvage pathway; L-methionine from S-methyl-5-thio-alpha-D-ribose 1-phosphate: step 1/6. Functionally, catalyzes the interconversion of methylthioribose-1-phosphate (MTR-1-P) into methylthioribulose-1-phosphate (MTRu-1-P). This chain is Methylthioribose-1-phosphate isomerase, found in Coccidioides posadasii (strain C735) (Valley fever fungus).